The chain runs to 257 residues: Zinc import ATP-binding protein ZnuC (257 aa).

The 216-residue stretch at 5-220 (ITLKNVAVNF…PEFIAMFGHH (216 aa)) folds into the ABC transporter domain. Residue 37–44 (GPNGAGKS) participates in ATP binding.

It belongs to the ABC transporter superfamily. Zinc importer (TC 3.A.1.15.5) family. In terms of assembly, the complex is composed of two ATP-binding proteins (ZnuC), two transmembrane proteins (ZnuB) and a solute-binding protein (ZnuA).

The protein localises to the cell inner membrane. It carries out the reaction Zn(2+)(out) + ATP(in) + H2O(in) = Zn(2+)(in) + ADP(in) + phosphate(in) + H(+)(in). Its function is as follows. Part of the ABC transporter complex ZnuABC involved in zinc import. Responsible for energy coupling to the transport system. This chain is Zinc import ATP-binding protein ZnuC, found in Photorhabdus laumondii subsp. laumondii (strain DSM 15139 / CIP 105565 / TT01) (Photorhabdus luminescens subsp. laumondii).